Reading from the N-terminus, the 545-residue chain is Glucose-6-phosphate isomerase 1 (545 aa).

The Proton donor role is filled by Glu356. Active-site residues include His387 and Lys508.

Belongs to the GPI family.

The protein resides in the cytoplasm. It catalyses the reaction alpha-D-glucose 6-phosphate = beta-D-fructose 6-phosphate. Its pathway is carbohydrate biosynthesis; gluconeogenesis. It functions in the pathway carbohydrate degradation; glycolysis; D-glyceraldehyde 3-phosphate and glycerone phosphate from D-glucose: step 2/4. Catalyzes the reversible isomerization of glucose-6-phosphate to fructose-6-phosphate. This Cupriavidus pinatubonensis (strain JMP 134 / LMG 1197) (Cupriavidus necator (strain JMP 134)) protein is Glucose-6-phosphate isomerase 1.